The chain runs to 236 residues: RING-H2 finger protein ATL7 (236 aa).

Residues 31-51 traverse the membrane as a helical segment; the sequence is AFIFSVPICFTFIVLFVLYVI. The segment at 111 to 153 adopts an RING-type; atypical zinc-finger fold; it reads CSVCLGDYQAEEKLQQMPSCGHTFHMECIDLWLTSHTTCPLCR. The segment covering 176–196 has biased composition (polar residues); the sequence is ENSNGGEASTQPDSQSATEAI. Positions 176–236 are disordered; sequence ENSNGGEAST…SDGCCTCRLG (61 aa). The segment covering 197–221 has biased composition (basic and acidic residues); the sequence is SHTDDVEEGNRDSQEVSKETEENDR.

It belongs to the RING-type zinc finger family. ATL subfamily.

It localises to the membrane. The catalysed reaction is S-ubiquitinyl-[E2 ubiquitin-conjugating enzyme]-L-cysteine + [acceptor protein]-L-lysine = [E2 ubiquitin-conjugating enzyme]-L-cysteine + N(6)-ubiquitinyl-[acceptor protein]-L-lysine.. The protein operates within protein modification; protein ubiquitination. The protein is RING-H2 finger protein ATL7 (ATL7) of Arabidopsis thaliana (Mouse-ear cress).